Consider the following 430-residue polypeptide: Phosphomethylpyrimidine synthase (430 aa).

Substrate is bound by residues Asn67, Met96, Tyr125, His161, 183–185 (SRG), 224–227 (DALR), and Glu263. Position 267 (His267) interacts with Zn(2+). Residue Tyr290 participates in substrate binding. His331 serves as a coordination point for Zn(2+). 3 residues coordinate [4Fe-4S] cluster: Cys406, Cys409, and Cys413.

It belongs to the ThiC family. In terms of assembly, homodimer. Requires [4Fe-4S] cluster as cofactor.

The enzyme catalyses 5-amino-1-(5-phospho-beta-D-ribosyl)imidazole + S-adenosyl-L-methionine = 4-amino-2-methyl-5-(phosphooxymethyl)pyrimidine + CO + 5'-deoxyadenosine + formate + L-methionine + 3 H(+). The protein operates within cofactor biosynthesis; thiamine diphosphate biosynthesis. In terms of biological role, catalyzes the synthesis of the hydroxymethylpyrimidine phosphate (HMP-P) moiety of thiamine from aminoimidazole ribotide (AIR) in a radical S-adenosyl-L-methionine (SAM)-dependent reaction. This Campylobacter jejuni subsp. doylei (strain ATCC BAA-1458 / RM4099 / 269.97) protein is Phosphomethylpyrimidine synthase.